Here is a 341-residue protein sequence, read N- to C-terminus: tRNA N6-adenosine threonylcarbamoyltransferase (341 aa).

The Fe cation site is built by histidine 117 and histidine 121. Residues 139–143 (VVSGG), aspartate 172, glycine 185, aspartate 189, and asparagine 278 each bind substrate. Fe cation is bound at residue aspartate 307.

It belongs to the KAE1 / TsaD family. Requires Fe(2+) as cofactor.

The protein localises to the cytoplasm. The enzyme catalyses L-threonylcarbamoyladenylate + adenosine(37) in tRNA = N(6)-L-threonylcarbamoyladenosine(37) in tRNA + AMP + H(+). Its function is as follows. Required for the formation of a threonylcarbamoyl group on adenosine at position 37 (t(6)A37) in tRNAs that read codons beginning with adenine. Is involved in the transfer of the threonylcarbamoyl moiety of threonylcarbamoyl-AMP (TC-AMP) to the N6 group of A37, together with TsaE and TsaB. TsaD likely plays a direct catalytic role in this reaction. The sequence is that of tRNA N6-adenosine threonylcarbamoyltransferase from Bacillus licheniformis (strain ATCC 14580 / DSM 13 / JCM 2505 / CCUG 7422 / NBRC 12200 / NCIMB 9375 / NCTC 10341 / NRRL NRS-1264 / Gibson 46).